The sequence spans 487 residues: 1-hydroxycarotenoid 3,4-desaturase (487 aa).

Residues glycine 12, glutamate 31, lysine 39, serine 55–leucine 56, valine 247, asparagine 275, leucine 431, glycine 461, and glycine 468–isoleucine 469 contribute to the FAD site.

Belongs to the carotenoid/retinoid oxidoreductase family. Monomer.

The enzyme catalyses rhodopin + A = (3E)-3,4-didehydrorhodopin + AH2. The catalysed reaction is 1'-hydroxy-gamma-carotene + A = 1'-hydroxytorulene + AH2. It catalyses the reaction 1-hydroxy-all-trans-1,2-dihydro-neurosporene + A = demethylspheroidene + AH2. It carries out the reaction 1,1'-dihydroxy-1,1',2,2'-tetrahydroneurosporene + A = 1'-hydroxy-demethylspheroidene + AH2. The enzyme catalyses 1,1'-dihydroxy-1,1',2,2'-tetrahydrolycopene + A = 1,1'-dihydroxy-3,4-didehydro-1,2-dihydrolycopene + AH2. It functions in the pathway carotenoid biosynthesis. Catalyzes the introduction of a C-3,4 double bond into 1'-hydroxy-gamma-carotene and rhodopin (1-hydroxylycopene) to yield 1'-hydroxytorulene and (3E)-3,4-didehydrorhodopin, respectively. Can also use 1-hydroxy-all-trans-1,2-dihydro-neurosporene, 1,1'-dihydroxy-1,1',2,2'-tetrahydroneurosporene and 1,1'-dihydroxy-1,1',2,2'-tetrahydrolycopene. Probably involved in the synthesis of myxol, a gamma-carotene derivative. May use FAD as a proton acceptor. This chain is 1-hydroxycarotenoid 3,4-desaturase, found in Nonlabens dokdonensis (strain DSM 17205 / KCTC 12402 / DSW-6) (Donghaeana dokdonensis).